A 476-amino-acid chain; its full sequence is Glutamate--tRNA ligase 1 (476 aa).

Positions 9–19 (PSPTGFLHIGG) match the 'HIGH' region motif. Positions 238–242 (KLSKR) match the 'KMSKS' region motif. Residue K241 participates in ATP binding.

It belongs to the class-I aminoacyl-tRNA synthetase family. Glutamate--tRNA ligase type 1 subfamily. Monomer.

The protein localises to the cytoplasm. It catalyses the reaction tRNA(Glu) + L-glutamate + ATP = L-glutamyl-tRNA(Glu) + AMP + diphosphate. Functionally, catalyzes the attachment of glutamate to tRNA(Glu) in a two-step reaction: glutamate is first activated by ATP to form Glu-AMP and then transferred to the acceptor end of tRNA(Glu). The protein is Glutamate--tRNA ligase 1 of Bartonella tribocorum (strain CIP 105476 / IBS 506).